Here is a 185-residue protein sequence, read N- to C-terminus: Adenine phosphoribosyltransferase (185 aa).

The protein belongs to the purine/pyrimidine phosphoribosyltransferase family. Homodimer.

The protein resides in the cytoplasm. The catalysed reaction is AMP + diphosphate = 5-phospho-alpha-D-ribose 1-diphosphate + adenine. It participates in purine metabolism; AMP biosynthesis via salvage pathway; AMP from adenine: step 1/1. Its function is as follows. Catalyzes a salvage reaction resulting in the formation of AMP, that is energically less costly than de novo synthesis. The chain is Adenine phosphoribosyltransferase from Corynebacterium glutamicum (strain ATCC 13032 / DSM 20300 / JCM 1318 / BCRC 11384 / CCUG 27702 / LMG 3730 / NBRC 12168 / NCIMB 10025 / NRRL B-2784 / 534).